Consider the following 307-residue polypeptide: Membrane protein insertase YidC 2 (307 aa).

The N-terminal stretch at 1 to 23 is a signal peptide; the sequence is MKLTLNRILFSGLALSILFTLTG. The N-palmitoyl cysteine moiety is linked to residue Cys-24. The S-diacylglycerol cysteine moiety is linked to residue Cys-24. The next 5 membrane-spanning stretches (helical) occupy residues 58-78, 135-155, 179-199, 209-225, and 231-251; these read LGYG…ILPL, LGGI…AMYF, VLTA…MMAV, TMMY…SFSL, and LYWL…TYLL. Residues 263 to 307 form a disordered region; it reads YAKTPPKAYQSTSSRKDVTPSQNMEQANLPKKIKSNRNAGKQRKR. Over residues 271–288 the composition is skewed to polar residues; it reads YQSTSSRKDVTPSQNMEQ. Over residues 293-307 the composition is skewed to basic residues; that stretch reads KKIKSNRNAGKQRKR.

This sequence belongs to the OXA1/ALB3/YidC family. Type 2 subfamily.

It is found in the cell membrane. Its function is as follows. Required for the insertion and/or proper folding and/or complex formation of integral membrane proteins into the membrane. Involved in integration of membrane proteins that insert both dependently and independently of the Sec translocase complex, as well as at least some lipoproteins. The protein is Membrane protein insertase YidC 2 of Streptococcus pyogenes serotype M18 (strain MGAS8232).